The primary structure comprises 444 residues: ATP-dependent protease ATPase subunit HslU (444 aa).

Residues Ile18, 60–65, Asp256, Glu322, and Arg394 contribute to the ATP site; that span reads GVGKTE.

It belongs to the ClpX chaperone family. HslU subfamily. In terms of assembly, a double ring-shaped homohexamer of HslV is capped on each side by a ring-shaped HslU homohexamer. The assembly of the HslU/HslV complex is dependent on binding of ATP.

The protein localises to the cytoplasm. Functionally, ATPase subunit of a proteasome-like degradation complex; this subunit has chaperone activity. The binding of ATP and its subsequent hydrolysis by HslU are essential for unfolding of protein substrates subsequently hydrolyzed by HslV. HslU recognizes the N-terminal part of its protein substrates and unfolds these before they are guided to HslV for hydrolysis. This chain is ATP-dependent protease ATPase subunit HslU, found in Klebsiella pneumoniae subsp. pneumoniae (strain ATCC 700721 / MGH 78578).